The chain runs to 197 residues: Pyridoxal 5'-phosphate synthase subunit PdxT (197 aa).

52-54 (GES) contacts L-glutamine. Catalysis depends on Cys84, which acts as the Nucleophile. L-glutamine-binding positions include Arg111 and 139–140 (IR). Residues His175 and Glu177 each act as charge relay system in the active site.

This sequence belongs to the glutaminase PdxT/SNO family. In the presence of PdxS, forms a dodecamer of heterodimers. Only shows activity in the heterodimer.

It catalyses the reaction aldehydo-D-ribose 5-phosphate + D-glyceraldehyde 3-phosphate + L-glutamine = pyridoxal 5'-phosphate + L-glutamate + phosphate + 3 H2O + H(+). The enzyme catalyses L-glutamine + H2O = L-glutamate + NH4(+). The protein operates within cofactor biosynthesis; pyridoxal 5'-phosphate biosynthesis. Functionally, catalyzes the hydrolysis of glutamine to glutamate and ammonia as part of the biosynthesis of pyridoxal 5'-phosphate. The resulting ammonia molecule is channeled to the active site of PdxS. This chain is Pyridoxal 5'-phosphate synthase subunit PdxT, found in Halorubrum lacusprofundi (strain ATCC 49239 / DSM 5036 / JCM 8891 / ACAM 34).